Here is a 206-residue protein sequence, read N- to C-terminus: Large ribosomal subunit protein uL4 (206 aa).

Positions 46–77 (GTRAQKDREQVRHSTKKPFKQKGTGRARAGMT) are disordered. A compositionally biased stretch (basic residues) spans 58–70 (HSTKKPFKQKGTG).

This sequence belongs to the universal ribosomal protein uL4 family. In terms of assembly, part of the 50S ribosomal subunit.

One of the primary rRNA binding proteins, this protein initially binds near the 5'-end of the 23S rRNA. It is important during the early stages of 50S assembly. It makes multiple contacts with different domains of the 23S rRNA in the assembled 50S subunit and ribosome. Functionally, forms part of the polypeptide exit tunnel. The chain is Large ribosomal subunit protein uL4 from Polaromonas naphthalenivorans (strain CJ2).